The sequence spans 233 residues: Orotidine 5'-phosphate decarboxylase (233 aa).

Substrate contacts are provided by residues D13, K35, 62-71, T122, R182, Q191, G211, and R212; that span reads DLKFHDIPNT. K64 serves as the catalytic Proton donor.

Belongs to the OMP decarboxylase family. Type 1 subfamily. In terms of assembly, homodimer.

It carries out the reaction orotidine 5'-phosphate + H(+) = UMP + CO2. Its pathway is pyrimidine metabolism; UMP biosynthesis via de novo pathway; UMP from orotate: step 2/2. In terms of biological role, catalyzes the decarboxylation of orotidine 5'-monophosphate (OMP) to uridine 5'-monophosphate (UMP). The polypeptide is Orotidine 5'-phosphate decarboxylase (Pseudomonas putida (strain GB-1)).